Here is a 197-residue protein sequence, read N- to C-terminus: Heart- and neural crest derivatives-expressed protein 1 (197 aa).

Disordered regions lie at residues 61 to 94 and 155 to 184; these read VVGP…RRTE and VDGK…KGRT. The segment covering 78-90 has biased composition (basic residues); that stretch reads LGRRKGAPPKKER. Residues 80–132 enclose the bHLH domain; that stretch reads RRKGAPPKKERRRTESINSAFAELRECIPNVPADTKLSKIKTLRLATSYIGYL.

Efficient DNA binding requires dimerization with another bHLH protein. In terms of tissue distribution, highly expressed in the adult heart and expressed at lower levels in the intestine and gall bladder.

It is found in the nucleus. Its subcellular location is the nucleolus. Its function is as follows. Plays an essential role in cardiac morphogenesis. The protein is Heart- and neural crest derivatives-expressed protein 1 (hand1) of Xenopus laevis (African clawed frog).